The chain runs to 489 residues: MDPVVVLVLCLSCCLLLSLWKQSSRKGKLPPGPTPLPFIGNILQLDKDINKSLSNLSKAYGPVFTLYFGMKPTVVLHGYDAVKETLIDLGEEFSARGRFPIAEKVSGGHGIIFTSGNRWKEMRRFALTTLRNLGMGKSDLESRVQEEACYLVEELRKTNALPCDPTFVLGCASCNVICSIIFQNRFDYTDQTLIGFLEKLNENFRILSSPWIQAYNSFPALLHYLPGSHNTIFKNFAFIKSYILEKIKEHQESFDVNNPRDFIDYFLIKMEQEKHNQPLEFTFENLKTIATDLFGAGTETTSTTLRYGLLLLLKHPEVTVKVQEEIDRVIGRHQSPHMQDRSRMPYTNAVLHEIQRYIDLVPNSLPHAVTCDVKFRNYVIPKGTTILISLSSVLSDEKEFPRPEIFDPAHFLDDSGNFKKSDYFMAFSAGKRICVGEGLARMELFLFLTTILQKFTLKPLVDPKDIDTTPLASGFGHVPPTYQLCFIPV.

Heme is bound at residue cysteine 434.

The protein belongs to the cytochrome P450 family. Requires heme as cofactor.

It localises to the endoplasmic reticulum membrane. It is found in the microsome membrane. It carries out the reaction an organic molecule + reduced [NADPH--hemoprotein reductase] + O2 = an alcohol + oxidized [NADPH--hemoprotein reductase] + H2O + H(+). Functionally, cytochromes P450 are a group of heme-thiolate monooxygenases. In liver microsomes, this enzyme is involved in an NADPH-dependent electron transport pathway. It oxidizes a variety of structurally unrelated compounds, including steroids, fatty acids, and xenobiotics. In Canis lupus familiaris (Dog), this protein is Cytochrome P450 2C41 (CYP2C41).